We begin with the raw amino-acid sequence, 526 residues long: Alpha-ketoglutaric semialdehyde dehydrogenase (526 aa).

NADP(+) contacts are provided by residues 159-160 (SN), 185-188 (KAHS), and 240-241 (GS). The active-site Proton acceptor is glutamate 264. Cysteine 301 (nucleophile) is an active-site residue. Glutamate 393 serves as a coordination point for NADP(+).

The protein belongs to the aldehyde dehydrogenase family.

The catalysed reaction is 2,5-dioxopentanoate + NADP(+) + H2O = 2-oxoglutarate + NADPH + 2 H(+). The protein operates within carbohydrate acid metabolism; D-glucarate degradation. Catalyzes the NAD(P)(+)-dependent oxidation of alpha-ketoglutaric semialdehyde (alphaKGSA) to alpha-ketoglutarate in the D-glutarate degradation pathway. The sequence is that of Alpha-ketoglutaric semialdehyde dehydrogenase from Acinetobacter baylyi (strain ATCC 33305 / BD413 / ADP1).